A 157-amino-acid chain; its full sequence is MKCPNCHKNGSRVVDSRPADNGHAIRRRRECEQCGYRFTTFERVEVTPLLVIKKNGTREEFQREKLLRGIVRAAEKRPVGIDEITEIVDKVENKLRSVGGTEVSSQLIGEYVMKILADVDEVAYIRYASVYREFKDMHAFADELRELMDREENNSKD.

The tract at residues 1–21 (MKCPNCHKNGSRVVDSRPADN) is disordered. A zinc finger spans residues 3–34 (CPNCHKNGSRVVDSRPADNGHAIRRRRECEQC). In terms of domain architecture, ATP-cone spans 49 to 139 (LLVIKKNGTR…VYREFKDMHA (91 aa)).

This sequence belongs to the NrdR family. Zn(2+) is required as a cofactor.

Negatively regulates transcription of bacterial ribonucleotide reductase nrd genes and operons by binding to NrdR-boxes. The sequence is that of Transcriptional repressor NrdR from Ligilactobacillus salivarius (strain UCC118) (Lactobacillus salivarius).